The following is a 407-amino-acid chain: Carbamoyl phosphate synthase small chain (407 aa).

The CPSase stretch occupies residues 1-205 (MTETTPKTAP…LQDGYGEQDA (205 aa)). 3 residues coordinate L-glutamine: Ser60, Gly257, and Gly259. The Glutamine amidotransferase type-1 domain occupies 209–397 (HVVALDFGVK…INLIRERKGQ (189 aa)). The Nucleophile role is filled by Cys286. L-glutamine-binding residues include Leu287, Gln290, Asn328, Gly330, and Phe331. Residues His370 and Glu372 contribute to the active site.

Belongs to the CarA family. In terms of assembly, composed of two chains; the small (or glutamine) chain promotes the hydrolysis of glutamine to ammonia, which is used by the large (or ammonia) chain to synthesize carbamoyl phosphate. Tetramer of heterodimers (alpha,beta)4.

The catalysed reaction is hydrogencarbonate + L-glutamine + 2 ATP + H2O = carbamoyl phosphate + L-glutamate + 2 ADP + phosphate + 2 H(+). It carries out the reaction L-glutamine + H2O = L-glutamate + NH4(+). The protein operates within amino-acid biosynthesis; L-arginine biosynthesis; carbamoyl phosphate from bicarbonate: step 1/1. It functions in the pathway pyrimidine metabolism; UMP biosynthesis via de novo pathway; (S)-dihydroorotate from bicarbonate: step 1/3. Small subunit of the glutamine-dependent carbamoyl phosphate synthetase (CPSase). CPSase catalyzes the formation of carbamoyl phosphate from the ammonia moiety of glutamine, carbonate, and phosphate donated by ATP, constituting the first step of 2 biosynthetic pathways, one leading to arginine and/or urea and the other to pyrimidine nucleotides. The small subunit (glutamine amidotransferase) binds and cleaves glutamine to supply the large subunit with the substrate ammonia. The protein is Carbamoyl phosphate synthase small chain of Brucella canis (strain ATCC 23365 / NCTC 10854 / RM-666).